We begin with the raw amino-acid sequence, 71 residues long: Small ribosomal subunit protein bS21 (71 aa).

It belongs to the bacterial ribosomal protein bS21 family.

The protein is Small ribosomal subunit protein bS21 of Blochmanniella pennsylvanica (strain BPEN).